The sequence spans 221 residues: HTH-type transcriptional regulator McbR (221 aa).

The HTH gntR-type domain maps to 10–77; it reads VSLTLQVEND…PAQAFTVPEV (68 aa). Positions 37-56 form a DNA-binding region, H-T-H motif; that stretch reads TKNLAEQLGMSITPVREALL.

Its function is as follows. Important for biofilm formation. Represses expression of McbA by binding to its promoter region, which prevents colanic acid overproduction and mucoidy. This Escherichia coli (strain K12) protein is HTH-type transcriptional regulator McbR (mcbR).